Consider the following 415-residue polypeptide: Serine--tRNA ligase (415 aa).

231–233 (TAE) contributes to the L-serine binding site. Position 262–264 (262–264 (RSE)) interacts with ATP. Glutamate 285 is an L-serine binding site. 349-352 (EISS) lines the ATP pocket. Serine 383 provides a ligand contact to L-serine.

It belongs to the class-II aminoacyl-tRNA synthetase family. Type-1 seryl-tRNA synthetase subfamily. As to quaternary structure, homodimer. The tRNA molecule binds across the dimer.

The protein resides in the cytoplasm. It carries out the reaction tRNA(Ser) + L-serine + ATP = L-seryl-tRNA(Ser) + AMP + diphosphate + H(+). The enzyme catalyses tRNA(Sec) + L-serine + ATP = L-seryl-tRNA(Sec) + AMP + diphosphate + H(+). Its pathway is aminoacyl-tRNA biosynthesis; selenocysteinyl-tRNA(Sec) biosynthesis; L-seryl-tRNA(Sec) from L-serine and tRNA(Sec): step 1/1. Its function is as follows. Catalyzes the attachment of serine to tRNA(Ser). Is also able to aminoacylate tRNA(Sec) with serine, to form the misacylated tRNA L-seryl-tRNA(Sec), which will be further converted into selenocysteinyl-tRNA(Sec). In Helicobacter pylori (strain ATCC 700392 / 26695) (Campylobacter pylori), this protein is Serine--tRNA ligase.